A 352-amino-acid polypeptide reads, in one-letter code: Coproporphyrin III ferrochelatase (352 aa).

Residues serine 52 and tyrosine 121 each contribute to the Fe-coproporphyrin III site. Fe(2+) is bound by residues histidine 181 and glutamate 269.

This sequence belongs to the ferrochelatase family.

Its subcellular location is the cytoplasm. The enzyme catalyses Fe-coproporphyrin III + 2 H(+) = coproporphyrin III + Fe(2+). It functions in the pathway porphyrin-containing compound metabolism; protoheme biosynthesis. In terms of biological role, involved in coproporphyrin-dependent heme b biosynthesis. Catalyzes the insertion of ferrous iron into coproporphyrin III to form Fe-coproporphyrin III. This Nocardia farcinica (strain IFM 10152) protein is Coproporphyrin III ferrochelatase.